We begin with the raw amino-acid sequence, 275 residues long: PE family protein PE8 (275 aa).

One can recognise a PE domain in the interval 5-93 (KTVPEELTAA…AGTYGVTESL (89 aa)).

Belongs to the mycobacterial PE family. In terms of assembly, forms a heterodimer with PPE15. The dimer forms a 1:1:1 heterotrimeric complex with EspG5.

It localises to the secreted. The protein resides in the cell wall. Functionally, promotes the intracellular survival of recombinant Mycobacterium within macrophages by regulating host inflammatory cytokines production and inhibiting cell late apoptosis. The protein is PE family protein PE8 of Mycobacterium tuberculosis (strain ATCC 25618 / H37Rv).